Reading from the N-terminus, the 299-residue chain is MAEFPASLLILNGKSTDNLPLREAIMLLREEGMTIHVRVTWEKGDAARYVEEARKLGVATVIAGGGDGTINEVSTALIQCEGDDIPALGILPLGTANDFATSVGIPEALDKALKLAIAGNAIAIDMAQVNKQTCFINMATGGFGTRITTETPEKLKAALGGVSYIIHGLMRMDTLQPDRCEIRGENFHWQGDGLVIGIGNGRQAGGGQQLCPNALINDGLLQLRIFTGDEILPALVSTLKSDEDNPNIIEGASSWFDIQAPHEITFNLDGEPLSGQNFHIEILPAALRCRLPPDCPLLR.

Positions 2 to 133 constitute a DAGKc domain; it reads AEFPASLLIL…IDMAQVNKQT (132 aa). ATP contacts are provided by residues Thr40, 66-72, and Thr95; that span reads GDGTINE. The Mg(2+) site is built by Leu215, Asp218, and Leu220. Catalysis depends on Glu271, which acts as the Proton acceptor.

This sequence belongs to the diacylglycerol/lipid kinase family. YegS lipid kinase subfamily. It depends on Mg(2+) as a cofactor. Ca(2+) serves as cofactor.

It is found in the cytoplasm. Functionally, probably phosphorylates lipids; the in vivo substrate is unknown. The protein is Probable lipid kinase YegS of Shigella dysenteriae serotype 1 (strain Sd197).